We begin with the raw amino-acid sequence, 278 residues long: Ribosomal RNA small subunit methyltransferase J (278 aa).

Residues 143 to 144 (ER) and D197 each bind S-adenosyl-L-methionine.

Belongs to the methyltransferase superfamily. RsmJ family.

Its subcellular location is the cytoplasm. The enzyme catalyses guanosine(1516) in 16S rRNA + S-adenosyl-L-methionine = N(2)-methylguanosine(1516) in 16S rRNA + S-adenosyl-L-homocysteine + H(+). In terms of biological role, specifically methylates the guanosine in position 1516 of 16S rRNA. The polypeptide is Ribosomal RNA small subunit methyltransferase J (Marinobacter nauticus (strain ATCC 700491 / DSM 11845 / VT8) (Marinobacter aquaeolei)).